Consider the following 687-residue polypeptide: POZ-, AT hook-, and zinc finger-containing protein 1 (687 aa).

The BTB domain occupies 41–130 (CDVLLRVGDE…AYTSRIVVRL (90 aa)). Residue Lys-112 forms a Glycyl lysine isopeptide (Lys-Gly) (interchain with G-Cter in SUMO2) linkage. Low complexity predominate over residues 250–260 (PFPSVASSAPP). The tract at residues 250 to 278 (PFPSVASSAPPLTGKRGRGRPRKANLLDS) is disordered. Residues 264 to 276 (KRGRGRPRKANLL) constitute a DNA-binding region (a.T hook). Lys-272 participates in a covalent cross-link: Glycyl lysine isopeptide (Lys-Gly) (interchain with G-Cter in SUMO2). At Ser-282 the chain carries Phosphoserine. The C2H2-type 1 zinc finger occupies 292–314 (LPCGLCGKVFTDANRLRQHEAQH). Residues 332 to 351 (GENGLPISEDPDGPRKRSRT) are disordered. C2H2-type zinc fingers lie at residues 355–377 (VACE…KLSH), 383–405 (YSCP…VRSH), 413–436 (YICQ…KQVH), 442–464 (HKCQ…LACH), and 495–518 (NFCS…KTHH). Residues 549-558 (EGQKCSHQDP) show a composition bias toward basic and acidic residues. The interval 549–603 (EGQKCSHQDPIESSDSYGDLSDASDLKTPEKQSANGSFSCDMAVPKNKMESDGEK) is disordered. Residues 605–628 (YPCPECGSFFRSKSYLNKHIQKVH) form a C2H2-type 7 zinc finger.

It belongs to the krueppel C2H2-type zinc-finger protein family. As to quaternary structure, homodimer. Interacts with RNF4. Interacts (via C-terminus) with TP53; this interaction inhibits TP53 ability to activate transcription. Ubiquitous.

The protein localises to the nucleus. Transcriptional regulator that plays a role in many biological processes such as embryogenesis, senescence, T-cell development or neurogenesis. Interacts with the TP53 protein to control genes that are important in proliferation and in the DNA-damage response. Mechanistically, the interaction inhibits the DNA binding and transcriptional activity of TP53/p53. Part of the transcriptional network modulating regulatory T-cell development and controls the generation of the regulatory T-cell pool under homeostatic conditions. Its function is as follows. (Microbial infection) Plays a positive role in viral cDNA synthesis. This chain is POZ-, AT hook-, and zinc finger-containing protein 1 (PATZ1), found in Homo sapiens (Human).